A 208-amino-acid polypeptide reads, in one-letter code: Large ribosomal subunit protein bL25 (208 aa).

It belongs to the bacterial ribosomal protein bL25 family. CTC subfamily. In terms of assembly, part of the 50S ribosomal subunit; part of the 5S rRNA/L5/L18/L25 subcomplex. Contacts the 5S rRNA. Binds to the 5S rRNA independently of L5 and L18.

In terms of biological role, this is one of the proteins that binds to the 5S RNA in the ribosome where it forms part of the central protuberance. In Paracoccus denitrificans (strain Pd 1222), this protein is Large ribosomal subunit protein bL25.